Consider the following 89-residue polypeptide: Small ribosomal subunit protein uS19 (89 aa).

Belongs to the universal ribosomal protein uS19 family.

Protein S19 forms a complex with S13 that binds strongly to the 16S ribosomal RNA. The sequence is that of Small ribosomal subunit protein uS19 from Rhodopirellula baltica (strain DSM 10527 / NCIMB 13988 / SH1).